Here is a 330-residue protein sequence, read N- to C-terminus: Ketol-acid reductoisomerase (NADP(+)) (330 aa).

The region spanning 1–181 (MNVYYEKDAD…GGTKAGVIET (181 aa)) is the KARI N-terminal Rossmann domain. Residues 24-27 (YGSQ), arginine 47, serine 50, serine 52, and 82-85 (DQNQ) each bind NADP(+). The active site involves histidine 107. An NADP(+)-binding site is contributed by glycine 133. Positions 182–327 (NFKNETETDL…AKLRNMMSWL (146 aa)) constitute a KARI C-terminal knotted domain. Mg(2+) contacts are provided by aspartate 190, glutamate 194, glutamate 226, and glutamate 230. Serine 251 is a binding site for substrate.

The protein belongs to the ketol-acid reductoisomerase family. Mg(2+) serves as cofactor.

The enzyme catalyses (2R)-2,3-dihydroxy-3-methylbutanoate + NADP(+) = (2S)-2-acetolactate + NADPH + H(+). It catalyses the reaction (2R,3R)-2,3-dihydroxy-3-methylpentanoate + NADP(+) = (S)-2-ethyl-2-hydroxy-3-oxobutanoate + NADPH + H(+). It participates in amino-acid biosynthesis; L-isoleucine biosynthesis; L-isoleucine from 2-oxobutanoate: step 2/4. The protein operates within amino-acid biosynthesis; L-valine biosynthesis; L-valine from pyruvate: step 2/4. In terms of biological role, involved in the biosynthesis of branched-chain amino acids (BCAA). Catalyzes an alkyl-migration followed by a ketol-acid reduction of (S)-2-acetolactate (S2AL) to yield (R)-2,3-dihydroxy-isovalerate. In the isomerase reaction, S2AL is rearranged via a Mg-dependent methyl migration to produce 3-hydroxy-3-methyl-2-ketobutyrate (HMKB). In the reductase reaction, this 2-ketoacid undergoes a metal-dependent reduction by NADPH to yield (R)-2,3-dihydroxy-isovalerate. The sequence is that of Ketol-acid reductoisomerase (NADP(+)) from Chlorobium chlorochromatii (strain CaD3).